An 881-amino-acid chain; its full sequence is Alanine--tRNA ligase (881 aa).

A compositionally biased stretch (basic and acidic residues) spans 422 to 440; the sequence is FEDEMQKQKERARSARSTE. A disordered region spans residues 422–445; the sequence is FEDEMQKQKERARSARSTEKSMGV. Residues His567, His571, Cys669, and His673 each coordinate Zn(2+).

It belongs to the class-II aminoacyl-tRNA synthetase family. Zn(2+) serves as cofactor.

The protein resides in the cytoplasm. It catalyses the reaction tRNA(Ala) + L-alanine + ATP = L-alanyl-tRNA(Ala) + AMP + diphosphate. Functionally, catalyzes the attachment of alanine to tRNA(Ala) in a two-step reaction: alanine is first activated by ATP to form Ala-AMP and then transferred to the acceptor end of tRNA(Ala). Also edits incorrectly charged Ser-tRNA(Ala) and Gly-tRNA(Ala) via its editing domain. This chain is Alanine--tRNA ligase, found in Pediococcus pentosaceus (strain ATCC 25745 / CCUG 21536 / LMG 10740 / 183-1w).